The following is a 161-amino-acid chain: 2-C-methyl-D-erythritol 2,4-cyclodiphosphate synthase (161 aa).

A divalent metal cation-binding residues include D10 and H12. 4-CDP-2-C-methyl-D-erythritol 2-phosphate-binding positions include 10 to 12 (DVH) and 36 to 37 (HS). A divalent metal cation is bound at residue H44. Residues 58-60 (DIG), 63-67 (FPDTD), 102-108 (AQAPKMA), 134-137 (TTTE), F141, and R144 each bind 4-CDP-2-C-methyl-D-erythritol 2-phosphate.

This sequence belongs to the IspF family. As to quaternary structure, homotrimer. A divalent metal cation serves as cofactor.

The catalysed reaction is 4-CDP-2-C-methyl-D-erythritol 2-phosphate = 2-C-methyl-D-erythritol 2,4-cyclic diphosphate + CMP. It functions in the pathway isoprenoid biosynthesis; isopentenyl diphosphate biosynthesis via DXP pathway; isopentenyl diphosphate from 1-deoxy-D-xylulose 5-phosphate: step 4/6. In terms of biological role, involved in the biosynthesis of isopentenyl diphosphate (IPP) and dimethylallyl diphosphate (DMAPP), two major building blocks of isoprenoid compounds. Catalyzes the conversion of 4-diphosphocytidyl-2-C-methyl-D-erythritol 2-phosphate (CDP-ME2P) to 2-C-methyl-D-erythritol 2,4-cyclodiphosphate (ME-CPP) with a corresponding release of cytidine 5-monophosphate (CMP). This is 2-C-methyl-D-erythritol 2,4-cyclodiphosphate synthase from Shewanella baltica (strain OS155 / ATCC BAA-1091).